A 410-amino-acid chain; its full sequence is MNYLISSLPFPNNFLNSSHSPFVFGLICGSLLGTSMNVGSFISLRRLIIQGIPAGVVSYLGSAISETFFLFLILFGYIGVIEKWFTLEPSLTFIITVFCADTIIGFLLDNRLKIVSLSQTTDLLKIFLCNAVIVFGNPGSTWGATSLITSIEGFQFRENSLFLFGVFLGIFVIGCGIGFLILALTNLWMIQSSKTFRSLIYRSNKIISHLALCILILSTIYYHWQVYIGLSLSTSSMPMITITKHDREPFYTDDESQMSWNRYKNKVERKNQPHPMKTLGGLPIKQFGQWFKKNVITSNPEDLDARGLPRERTKTGDYVPNYETMQAIRNKKWFSRSKNYLYIKEKIFSLLSINPMKVKFLEHSRRDMDLFYLGDKKSTRITITEMSKSDYNQMLENRKQRIQNIINRRN.

The next 6 helical transmembrane spans lie at 22–42 (FVFG…GSFI), 61–81 (GSAI…IGVI), 87–107 (LEPS…IGFL), 131–151 (AVIV…ITSI), 161–181 (LFLF…GFLI), and 210–230 (LALC…YIGL).

The protein belongs to the TIC214 family. As to quaternary structure, part of the Tic complex.

The protein localises to the plastid. It is found in the chloroplast inner membrane. Functionally, involved in protein precursor import into chloroplasts. May be part of an intermediate translocation complex acting as a protein-conducting channel at the inner envelope. The chain is Protein TIC 214 from Mesostigma viride (Green alga).